We begin with the raw amino-acid sequence, 225 residues long: MDSSGKYNAAKLALELVKDGMVLGIGSGSTVEVFLNLLGDKIREEGLEIYGIPSSYQSYFAAIRNGVEIVDLVEFEPDLCIDGADQVDAKLNCIKGGGGAMTREKIVAKASRKVVIIVDESKLVEKLSMPVPVEVLPFAYGWVLREIEKMGCKARLREGKGKIGPVITDNGNFVVDCDFGVIEEDRVEGLEGEIKLISGVVENGIFSKELIDAVIAGSSRSARFL.

Residues 27–30 (SGST), 82–85 (DGAD), and 95–98 (KGGG) each bind substrate. The active-site Proton acceptor is E104. K122 is a binding site for substrate.

Belongs to the ribose 5-phosphate isomerase family. As to quaternary structure, homodimer.

The catalysed reaction is aldehydo-D-ribose 5-phosphate = D-ribulose 5-phosphate. It functions in the pathway carbohydrate degradation; pentose phosphate pathway; D-ribose 5-phosphate from D-ribulose 5-phosphate (non-oxidative stage): step 1/1. In terms of biological role, catalyzes the reversible conversion of ribose-5-phosphate to ribulose 5-phosphate. The polypeptide is Ribose-5-phosphate isomerase A (Archaeoglobus fulgidus (strain ATCC 49558 / DSM 4304 / JCM 9628 / NBRC 100126 / VC-16)).